The sequence spans 514 residues: Chromosomal replication initiator protein DnaA (514 aa).

Residues 1–90 (MSVELWQQCV…KRSRTPRAAI (90 aa)) are domain I, interacts with DnaA modulators. Residues 91 to 177 (VPSQTHVAPP…QVEGALKHTS (87 aa)) are domain II. The domain III, AAA+ region stretch occupies residues 178-394 (YLNRTFTFEN…GALKRVIAHS (217 aa)). The ATP site is built by G222, G224, K225, and T226. The segment at 395–514 (HFMGRPITIE…YKNLLRTLTT (120 aa)) is domain IV, binds dsDNA.

The protein belongs to the DnaA family. As to quaternary structure, oligomerizes as a right-handed, spiral filament on DNA at oriC.

The protein localises to the cytoplasm. In terms of biological role, plays an essential role in the initiation and regulation of chromosomal replication. ATP-DnaA binds to the origin of replication (oriC) to initiate formation of the DNA replication initiation complex once per cell cycle. Binds the DnaA box (a 9 base pair repeat at the origin) and separates the double-stranded (ds)DNA. Forms a right-handed helical filament on oriC DNA; dsDNA binds to the exterior of the filament while single-stranded (ss)DNA is stabiized in the filament's interior. The ATP-DnaA-oriC complex binds and stabilizes one strand of the AT-rich DNA unwinding element (DUE), permitting loading of DNA polymerase. After initiation quickly degrades to an ADP-DnaA complex that is not apt for DNA replication. Binds acidic phospholipids. This is Chromosomal replication initiator protein DnaA from Pseudomonas aeruginosa (strain LESB58).